The primary structure comprises 159 residues: Vesicle transport protein SFT2A (159 aa).

The Cytoplasmic portion of the chain corresponds to 1 to 36 (MEKLRRVLSGQDDEEQGLTAQVLDASSLSFNTRLKW). Serine 9 bears the Phosphoserine mark. The helical transmembrane segment at 37–57 (FAICFVCGVFFSILGTGLLWL) threads the bilayer. At 58-62 (PGGIK) the chain is on the lumenal side. A helical transmembrane segment spans residues 63 to 83 (LFAVFYTLGNLAALASTCFLM). Over 84 to 97 (GPVKQLKKMFEATR) the chain is Cytoplasmic. Residues 98-118 (LLATIVMLLCFIFTLCAALWW) traverse the membrane as a helical segment. The Lumenal segment spans residues 119–122 (HKKG). Residues 123-143 (LAVLFCILQFLSMTWYSLSYI) form a helical membrane-spanning segment. The Cytoplasmic segment spans residues 144–159 (PYARDAVIKCCSSLLS).

This sequence belongs to the SFT2 family.

It localises to the membrane. May be involved in fusion of retrograde transport vesicles derived from an endocytic compartment with the Golgi complex. The protein is Vesicle transport protein SFT2A of Homo sapiens (Human).